The following is an 89-amino-acid chain: Small ribosomal subunit protein uS15 (89 aa).

The protein belongs to the universal ribosomal protein uS15 family. Part of the 30S ribosomal subunit. Forms a bridge to the 50S subunit in the 70S ribosome, contacting the 23S rRNA.

In terms of biological role, one of the primary rRNA binding proteins, it binds directly to 16S rRNA where it helps nucleate assembly of the platform of the 30S subunit by binding and bridging several RNA helices of the 16S rRNA. Forms an intersubunit bridge (bridge B4) with the 23S rRNA of the 50S subunit in the ribosome. The protein is Small ribosomal subunit protein uS15 of Exiguobacterium sp. (strain ATCC BAA-1283 / AT1b).